An 80-amino-acid chain; its full sequence is NAD(P)H-quinone oxidoreductase subunit O (80 aa).

Belongs to the complex I NdhO subunit family. In terms of assembly, NDH-1 can be composed of about 15 different subunits; different subcomplexes with different compositions have been identified which probably have different functions.

Its subcellular location is the cellular thylakoid membrane. It carries out the reaction a plastoquinone + NADH + (n+1) H(+)(in) = a plastoquinol + NAD(+) + n H(+)(out). The catalysed reaction is a plastoquinone + NADPH + (n+1) H(+)(in) = a plastoquinol + NADP(+) + n H(+)(out). NDH-1 shuttles electrons from an unknown electron donor, via FMN and iron-sulfur (Fe-S) centers, to quinones in the respiratory and/or the photosynthetic chain. The immediate electron acceptor for the enzyme in this species is believed to be plastoquinone. Couples the redox reaction to proton translocation, and thus conserves the redox energy in a proton gradient. Cyanobacterial NDH-1 also plays a role in inorganic carbon-concentration. The sequence is that of NAD(P)H-quinone oxidoreductase subunit O from Prochlorococcus marinus (strain MIT 9515).